The sequence spans 379 residues: 1-deoxy-D-xylulose 5-phosphate reductoisomerase (379 aa).

Residues Thr-10, Gly-11, Ser-12, Ile-13, Gly-36, Asn-38, and Asn-121 each contribute to the NADPH site. Lys-122 contributes to the 1-deoxy-D-xylulose 5-phosphate binding site. Glu-123 is a binding site for NADPH. Asp-147 serves as a coordination point for Mn(2+). 4 residues coordinate 1-deoxy-D-xylulose 5-phosphate: Ser-148, Glu-149, Ser-173, and His-196. Glu-149 serves as a coordination point for Mn(2+). Gly-202 contacts NADPH. 1-deoxy-D-xylulose 5-phosphate contacts are provided by Ser-209, Asn-214, Lys-215, and Glu-218. Glu-218 lines the Mn(2+) pocket.

The protein belongs to the DXR family. It depends on Mg(2+) as a cofactor. Mn(2+) serves as cofactor.

The enzyme catalyses 2-C-methyl-D-erythritol 4-phosphate + NADP(+) = 1-deoxy-D-xylulose 5-phosphate + NADPH + H(+). It functions in the pathway isoprenoid biosynthesis; isopentenyl diphosphate biosynthesis via DXP pathway; isopentenyl diphosphate from 1-deoxy-D-xylulose 5-phosphate: step 1/6. Functionally, catalyzes the NADPH-dependent rearrangement and reduction of 1-deoxy-D-xylulose-5-phosphate (DXP) to 2-C-methyl-D-erythritol 4-phosphate (MEP). The polypeptide is 1-deoxy-D-xylulose 5-phosphate reductoisomerase (Shouchella clausii (strain KSM-K16) (Alkalihalobacillus clausii)).